Reading from the N-terminus, the 89-residue chain is Putative regulatory protein CYA_2696 (89 aa).

This sequence belongs to the RemA family.

This Synechococcus sp. (strain JA-3-3Ab) (Cyanobacteria bacterium Yellowstone A-Prime) protein is Putative regulatory protein CYA_2696.